Consider the following 282-residue polypeptide: Protease HtpX homolog (282 aa).

2 helical membrane passes run Thr6–Gly26 and Gly29–His49. His130 contributes to the Zn(2+) binding site. Residue Glu131 is part of the active site. His134 provides a ligand contact to Zn(2+). A run of 2 helical transmembrane segments spans residues Ile140–Ala160 and Ile180–Ile200. Glu205 serves as a coordination point for Zn(2+).

The protein belongs to the peptidase M48B family. Requires Zn(2+) as cofactor.

It localises to the cell inner membrane. This chain is Protease HtpX homolog, found in Thermodesulfovibrio yellowstonii (strain ATCC 51303 / DSM 11347 / YP87).